A 149-amino-acid chain; its full sequence is Large ribosomal subunit protein bL9 (149 aa).

This sequence belongs to the bacterial ribosomal protein bL9 family.

Its function is as follows. Binds to the 23S rRNA. In Thermotoga maritima (strain ATCC 43589 / DSM 3109 / JCM 10099 / NBRC 100826 / MSB8), this protein is Large ribosomal subunit protein bL9.